The primary structure comprises 656 residues: MTSFSHLSRLRMSAFLPHVCLQCRLKTVSSLPAQSSASSLLQAVRHASSARPRRRTPSRMTLSPNVAQSTVKYGEKRKSVRHQNGPFGGMNQRRANLRDRQRPRSQAELKRTSFKKDKDGSEKKQPELFKALKMQTALSSVSYGRRTSIKSKISNITSFDQFDLLPSVRQSVYDSALPGLEYVTPTPIQRLAIPAILRQGSATPKPEEGQEDMPRFDQYLLAAETGSGKTLAYLLPVVDAIKRTEAKDKEEEERMAKEELEKEQEQAKEKNQNLFELESPGEEEEPINAPKSVVKPKAIILVPTSELVEQIGRIVKQLAHTVKYRSALLASNYTPRKIRKTLFNPNGLDILVTTPYLVASIAEANPYIFSRVTHLVVDEADSLFDKSFSPKTNTIIDRTAPTLKQLILCSATIPRSLDNRLRERFPQIRRLVTPNLHAIPRRVQLGVVDIDKEPYRGRRHLACADAIWSIGRSGNPYDADVGYQVTGQKEPKSIIVFVNERETAAEVAEFLVTKGINAVSLTRDTSEKRQAQILAEFTTEKNPPQPEDYKMLKGNRSDDDSVPFVNVRPGNERSNRLSNTKVLVVTDLGSRGIDTVAVKTVILYDVPHSTIDFIHRLGRLGRMGRRGRGIVLVGKKDRKDVVREVREAMYRGQALI.

The transit peptide at 1–46 (MTSFSHLSRLRMSAFLPHVCLQCRLKTVSSLPAQSSASSLLQAVRH) directs the protein to the mitochondrion. Positions 42-125 (QAVRHASSAR…KDKDGSEKKQ (84 aa)) are disordered. Polar residues predominate over residues 60–71 (MTLSPNVAQSTV). Residues 96-125 (NLRDRQRPRSQAELKRTSFKKDKDGSEKKQ) are compositionally biased toward basic and acidic residues. The short motif at 157 to 190 (TSFDQFDLLPSVRQSVYDSALPGLEYVTPTPIQR) is the Q motif element. Residues 210-431 (QEDMPRFDQY…RERFPQIRRL (222 aa)) enclose the Helicase ATP-binding domain. 223 to 230 (AETGSGKT) lines the ATP pocket. A disordered region spans residues 246–270 (AKDKEEEERMAKEELEKEQEQAKEK). Residues 378 to 381 (DEAD) carry the DEAD box motif. A Helicase C-terminal domain is found at 480-656 (DVGYQVTGQK…EAMYRGQALI (177 aa)).

The protein belongs to the DEAD box helicase family. MRH4 subfamily.

The protein resides in the mitochondrion. The enzyme catalyses ATP + H2O = ADP + phosphate + H(+). Functionally, ATP-binding RNA helicase involved in mitochondrial RNA metabolism. Required for maintenance of mitochondrial DNA. This is ATP-dependent RNA helicase MRH4, mitochondrial (MRH4) from Coccidioides immitis (strain RS) (Valley fever fungus).